The following is a 344-amino-acid chain: Acyl-CoA ligase clz12 (344 aa).

2 AMP-binding regions span residues 2-239 (VQRS…IIKV) and 248-322 (ELET…PSGK).

The protein belongs to the ATP-dependent AMP-binding enzyme family.

Its pathway is secondary metabolite biosynthesis. Its function is as follows. Acyl-CoA ligase; part of the gene cluster that mediates the biosynthesis of squalestatin S1 (SQS1, also known as zaragozic acid A), a heavily oxidized fungal polyketide that offers potent cholesterol lowering activity by targeting squalene synthase (SS). SQS1 is composed of a 2,8-dioxobicyclic[3.2.1]octane-3,4,5-tricarboxyclic acid core that is connected to two lipophilic polyketide arms. These initial steps feature the priming of an unusual benzoic acid starter unit onto the highly reducing polyketide synthase clz14, followed by oxaloacetate extension and product release to generate a tricarboxylic acid containing product. The phenylalanine ammonia lyase (PAL) clz10 and the acyl-CoA ligase clz12 are involved in transforming phenylalanine into benzoyl-CoA. The citrate synthase-like protein clz17 is involved in connecting the C-alpha-carbons of the hexaketide chain and oxaloacetate to afford the tricarboxylic acid unit. The potential hydrolytic enzymes, clz11 and clz13, are in close proximity to pks2 and may participate in product release. On the other side, the tetraketide arm is synthesized by a the squalestatin tetraketide synthase clz2 and enzymatically esterified to the core in the last biosynthetic step, by the acetyltransferase clz6. The biosynthesis of the tetraketide must involve 3 rounds of chain extension. After the first and second rounds methyl-transfer occurs, and in all rounds of extension the ketoreductase and dehydratase are active. The enoyl reductase and C-MeT of clz2 are not active in the final round of extension. The acetyltransferase clz6 appears to have a broad substrate selectivity for its acyl CoA substrate, allowing the in vitro synthesis of novel squalestatins. The biosynthesis of SQS1 requires several oxidative steps likely performed by oxidoreductases clz3, clz15 and clz16. Finally, in support of the identification of the cluster as being responsible for SQS1 production, the cluster contains a gene encoding a putative squalene synthase (SS) clz20, suggesting a likely mechanism for self-resistance. The sequence is that of Acyl-CoA ligase clz12 from Cochliobolus lunatus (Filamentous fungus).